Here is a 54-residue protein sequence, read N- to C-terminus: Large ribosomal subunit protein bL33A (54 aa).

It belongs to the bacterial ribosomal protein bL33 family.

The sequence is that of Large ribosomal subunit protein bL33A from Streptomyces avermitilis (strain ATCC 31267 / DSM 46492 / JCM 5070 / NBRC 14893 / NCIMB 12804 / NRRL 8165 / MA-4680).